The sequence spans 341 residues: Hygromycin-B 4-O-kinase (341 aa).

Residue D198 is the Proton acceptor of the active site.

The protein belongs to the aminoglycoside phosphotransferase family.

The catalysed reaction is hygromycin B + ATP = 4-O-phosphohygromycin B + ADP + H(+). In terms of biological role, the aminoglycoside phosphotransferases achieve inactivation of their antibiotic substrates by phosphorylation. Only phosphorylates hygromycin and closely related compounds such as demethyl analogs and destomycin. The chain is Hygromycin-B 4-O-kinase (hph) from Escherichia coli.